Consider the following 396-residue polypeptide: Elongation factor Tu (396 aa).

The tr-type G domain maps to 10 to 205; that stretch reads KPHVNIGTIG…AVDESIPDPV (196 aa). Positions 19–26 are G1; that stretch reads GHVDHGKT. 19–26 provides a ligand contact to GTP; that stretch reads GHVDHGKT. Thr-26 contacts Mg(2+). Residues 62 to 66 form a G2 region; that stretch reads GITIN. A G3 region spans residues 83–86; that stretch reads DAPG. Residues 83–87 and 138–141 each bind GTP; these read DAPGH and NKAD. A G4 region spans residues 138–141; that stretch reads NKAD. The interval 175–177 is G5; sequence SAL.

Belongs to the TRAFAC class translation factor GTPase superfamily. Classic translation factor GTPase family. EF-Tu/EF-1A subfamily. Monomer.

Its subcellular location is the cytoplasm. The enzyme catalyses GTP + H2O = GDP + phosphate + H(+). GTP hydrolase that promotes the GTP-dependent binding of aminoacyl-tRNA to the A-site of ribosomes during protein biosynthesis. This Mycobacterium bovis (strain ATCC BAA-935 / AF2122/97) protein is Elongation factor Tu.